A 247-amino-acid chain; its full sequence is C-type lectin domain family 7 member A (247 aa).

The Cytoplasmic segment spans residues 1 to 44; sequence MEYQSSVENLDEDGYTQLDFSSRNITRRSVVSEKGLCAASSHWR. The ITAM-like signature appears at 15 to 18; sequence YTQL. A helical; Signal-anchor for type II membrane protein membrane pass occupies residues 45-65; the sequence is LIAVTLGILCSVMLVITVVLS. The Extracellular segment spans residues 66-247; that stretch reads TSGIWRSSSG…YSICEKKLSV (182 aa). Residues 81–101 show a composition bias toward polar residues; that stretch reads SDSFPSRNKDNQSQPTQSSLE. Positions 81 to 103 are disordered; that stretch reads SDSFPSRNKDNQSQPTQSSLEDS. Residue Asn-91 is glycosylated (N-linked (GlcNAc...) asparagine). 3 cysteine pairs are disulfide-bonded: Cys-120–Cys-131, Cys-148–Cys-241, and Cys-220–Cys-233. The region spanning 127–242 is the C-type lectin domain; that stretch reads HEDSCYLFST…CSVHSYSICE (116 aa). Residue 146-153 participates in (1,3-beta-D-glucosyl)n binding; the sequence is RQCFQLGS. Positions 157, 159, and 163 each coordinate a divalent metal cation. (1,3-beta-D-glucosyl)n is bound at residue Glu-195. Glu-242 is a binding site for a divalent metal cation.

As to quaternary structure, homodimer. Interacts with SYK; participates in leukocyte activation in presence of fungal pathogens. Interacts with CD37; this interaction controls CLEC7A-mediated IL-6 production. In terms of processing, phosphorylated on tyrosine residues in response to beta-glucan binding. In terms of tissue distribution, detected in bone marrow, monocytes, macrophages, dendritic cells and natural killer cells.

The protein localises to the cell membrane. Lectin that functions as a pattern recognizing receptor (PRR) specific for beta-1,3-linked and beta-1,6-linked glucans, which constitute cell wall constituents from pathogenic bacteria and fungi. Necessary for the TLR2-mediated inflammatory response and activation of NF-kappa-B: upon beta-glucan binding, recruits SYK via its ITAM motif and promotes a signaling cascade that activates some CARD domain-BCL10-MALT1 (CBM) signalosomes, leading to the activation of NF-kappa-B and MAP kinase p38 (MAPK11, MAPK12, MAPK13 and/or MAPK14) pathways which stimulate expression of genes encoding pro-inflammatory cytokines and chemokines. Enhances cytokine production in macrophages and dendritic cells. Mediates production of reactive oxygen species in the cell. Mediates phagocytosis of C.albicans conidia. Binds T-cells in a way that does not involve their surface glycans and plays a role in T-cell activation. Stimulates T-cell proliferation. Induces phosphorylation of SCIMP after binding beta-glucans. The sequence is that of C-type lectin domain family 7 member A (CLEC7A) from Bos taurus (Bovine).